Consider the following 338-residue polypeptide: tRNA N6-adenosine threonylcarbamoyltransferase (338 aa).

Residues H111 and H115 each contribute to the Fe cation site. Substrate is bound by residues 134–138, D167, G180, and N272; that span reads LVSGG. D300 provides a ligand contact to Fe cation.

It belongs to the KAE1 / TsaD family. Fe(2+) serves as cofactor.

The protein resides in the cytoplasm. It catalyses the reaction L-threonylcarbamoyladenylate + adenosine(37) in tRNA = N(6)-L-threonylcarbamoyladenosine(37) in tRNA + AMP + H(+). Functionally, required for the formation of a threonylcarbamoyl group on adenosine at position 37 (t(6)A37) in tRNAs that read codons beginning with adenine. Is involved in the transfer of the threonylcarbamoyl moiety of threonylcarbamoyl-AMP (TC-AMP) to the N6 group of A37, together with TsaE and TsaB. TsaD likely plays a direct catalytic role in this reaction. The sequence is that of tRNA N6-adenosine threonylcarbamoyltransferase from Shewanella sp. (strain ANA-3).